A 125-amino-acid chain; its full sequence is Small ribosomal subunit protein uS13 (125 aa).

Residues 92-125 (RRSLPARGQRTRTNARTRKGKRKTVAGKKKAGKK) are disordered.

Belongs to the universal ribosomal protein uS13 family. As to quaternary structure, part of the 30S ribosomal subunit. Forms a loose heterodimer with protein S19. Forms two bridges to the 50S subunit in the 70S ribosome.

Its function is as follows. Located at the top of the head of the 30S subunit, it contacts several helices of the 16S rRNA. In the 70S ribosome it contacts the 23S rRNA (bridge B1a) and protein L5 of the 50S subunit (bridge B1b), connecting the 2 subunits; these bridges are implicated in subunit movement. Contacts the tRNAs in the A and P-sites. This Chlorobaculum parvum (strain DSM 263 / NCIMB 8327) (Chlorobium vibrioforme subsp. thiosulfatophilum) protein is Small ribosomal subunit protein uS13.